Here is a 644-residue protein sequence, read N- to C-terminus: Protein cueball (644 aa).

A signal peptide spans 1 to 26 (MIRIRFGMDVLLVVLLATCLLTPAHG). Residues 27–531 (TPLEWDFAVT…VCLTPRVWTS (505 aa)) are Extracellular-facing. Residues Asn-82 and Asn-108 are each glycosylated (N-linked (GlcNAc...) asparagine). 3 LDL-receptor class B repeats span residues 121-166 (MNLF…DVCR), 167-211 (RKLY…DQLS), and 212-257 (DRLF…TNDA). Residues Asn-175 and Asn-190 are each glycosylated (N-linked (GlcNAc...) asparagine). Asn-313 is a glycosylation site (N-linked (GlcNAc...) asparagine). 2 consecutive EGF-like domains span residues 398–430 (EIRECHNYCVHGTCQMSELAYPKCYCQPGFTGE) and 433–471 (ELSVCSGLCLNGGHCRVSKDENEAPSCECPAKFGGARCE). Disulfide bonds link Cys-402/Cys-411, Cys-406/Cys-421, Cys-437/Cys-447, Cys-441/Cys-459, and Cys-461/Cys-470. Asn-473 and Asn-508 each carry an N-linked (GlcNAc...) asparagine glycan. Residues 532 to 552 (SVIIILVVGIVSSLLLVAVIV) traverse the membrane as a helical segment. Residues 553–644 (HGIRRLYKPK…LIHNMEDDLY (92 aa)) are Cytoplasmic-facing.

The protein belongs to the cueball family.

The protein resides in the cell membrane. Functionally, has a role in spermatogenesis and oogenesis. This Drosophila simulans (Fruit fly) protein is Protein cueball.